The primary structure comprises 133 residues: Late embryogenesis abundant protein B19.3 (133 aa).

The disordered stretch occupies residues 1 to 133; the sequence is MASGQQERSE…IDESKFKTKS (133 aa). Composition is skewed to basic and acidic residues over residues 7 to 19, 32 to 102, and 113 to 133; these read ERSELDRMAREGE, EAQE…EMGR, and GGERAAREGIDIDESKFKTKS. A run of 3 repeats spans residues 24–43, 44–63, and 64–83. The tract at residues 24 to 83 is 3 X 20 AA tandem repeats; the sequence is GGTGGKTLEAQEHLAEGRSRGGQTRKDQLGEEGYREMGHKGGETRKEQLGEEGYREMGHK.

This sequence belongs to the small hydrophilic plant seed protein family.

In terms of biological role, lea proteins are late embryonic proteins abundant in higher plant seed embryos. The chain is Late embryogenesis abundant protein B19.3 (B19.3) from Hordeum vulgare (Barley).